The chain runs to 1501 residues: Protein SNQ2 (1501 aa).

A compositionally biased stretch (polar residues) spans Met1–Arg17. A disordered region spans residues Met1–Ala56. The residue at position 2 (Ser2) is an N-acetylserine. The span at Ser18 to Phe30 shows a compositional bias: low complexity. Residues Ser26 and Ser29 each carry the phosphoserine modification. The span at Thr34–Thr49 shows a compositional bias: basic and acidic residues. Residues Ser64, Ser80, and Ser86 each carry the phosphoserine modification. The 250-residue stretch at Phe161–Pro410 folds into the ABC transporter 1 domain. Residues Asn273, Asn334, and Asn518 are each glycosylated (N-linked (GlcNAc...) asparagine). 5 helical membrane-spanning segments follow: residues Tyr521–Tyr541, Gly554–Phe574, Leu600–Leu620, Gly628–Phe648, and Ile664–Ile680. A glycan (N-linked (GlcNAc...) asparagine) is linked at Asn730. The helical transmembrane segment at Phe771–Thr789 threads the bilayer. The ABC transporter 2 domain occupies Phe853–Ala1095. An N-linked (GlcNAc...) asparagine glycan is attached at Asn874. Gly889–Thr896 contacts ATP. At Thr1153 the chain carries Phosphothreonine. The next 4 membrane-spanning stretches (helical) occupy residues Ile1190–Gly1212, Val1216–Met1236, His1277–Phe1296, and Ala1333–Gln1352. N-linked (GlcNAc...) asparagine glycosylation occurs at Asn1401. A helical membrane pass occupies residues Phe1455 to Leu1475.

It belongs to the ABC transporter superfamily. ABCG family. PDR (TC 3.A.1.205) subfamily.

The protein localises to the membrane. Could be an ATP-dependent permease. Confers hyper-resistance to the mutagens 4-nitroquinoline-N-oxide (4-NQO) and triaziquone, as well as to the chemicals sulphomethuron methyl phenanthroline when present in multiple copies. Exhibits nucleoside triphosphatase activity. The polypeptide is Protein SNQ2 (SNQ2) (Saccharomyces cerevisiae (strain ATCC 204508 / S288c) (Baker's yeast)).